The sequence spans 238 residues: Probable transcriptional regulatory protein llmg_0242 (238 aa).

This sequence belongs to the TACO1 family. YeeN subfamily.

The protein localises to the cytoplasm. In Lactococcus lactis subsp. cremoris (strain MG1363), this protein is Probable transcriptional regulatory protein llmg_0242.